The primary structure comprises 112 residues: Large ribosomal subunit protein P2A (112 aa).

Residues 83-112 (GAAPAAEAKKEEKVEEKEESDDDMGFSLFD) form a disordered region. Residues 89 to 98 (EAKKEEKVEE) show a composition bias toward basic and acidic residues.

Belongs to the eukaryotic ribosomal protein P1/P2 family. As to quaternary structure, P1 and P2 exist as dimers at the large ribosomal subunit. In terms of processing, phosphorylated.

Its function is as follows. Plays an important role in the elongation step of protein synthesis. The chain is Large ribosomal subunit protein P2A (RPP2A) from Zea mays (Maize).